The sequence spans 148 residues: Protoporphyrinogen IX oxidase (148 aa).

4 helical membrane-spanning segments follow: residues 7 to 27 (YFLWVKAFHVIAVISWMAALF), 58 to 78 (SFIASPAMGFTLITGILMLLI), 86 to 106 (GGWLHAKLALVVLLLAYHFYC), and 128 to 148 (FNEAPTILMILIVILVVVKPF). Histidine 15 contributes to the heme binding site. Residue lysine 92 coordinates heme.

Belongs to the HemJ family. In terms of assembly, homodimer. Heme b is required as a cofactor.

The protein resides in the cell membrane. The catalysed reaction is protoporphyrinogen IX + 3 A = protoporphyrin IX + 3 AH2. It functions in the pathway porphyrin-containing compound metabolism; protoporphyrin-IX biosynthesis; protoporphyrin-IX from protoporphyrinogen-IX: step 1/1. Functionally, catalyzes the oxidation of protoporphyrinogen IX to protoporphyrin IX. Is involved in the biosynthesis of tetrapyrrole molecules like heme. Does not use oxygen or artificial electron acceptors such as menadione or benzoquinone. In Helicobacter pylori (strain ATCC 700392 / 26695) (Campylobacter pylori), this protein is Protoporphyrinogen IX oxidase.